The sequence spans 479 residues: 5-hydroxytryptamine receptor 2B (479 aa).

The Extracellular portion of the chain corresponds to 1–55; the sequence is MASSYKMSEQSTTSEHILQKTCDHLILTNRSGLETDSVAEEMKQTVEGQGHTVHW. A glycan (N-linked (GlcNAc...) asparagine) is linked at Asn29. The chain crosses the membrane as a helical span at residues 56-78; it reads AALLILAVIIPTIGGNILVILAV. Residues 79–89 lie on the Cytoplasmic side of the membrane; sequence ALEKRLQYATN. Residues 90–112 traverse the membrane as a helical segment; it reads YFLMSLAIADLLVGLFVMPIALL. The Extracellular segment spans residues 113–128; the sequence is TIMFEAIWPLPLALCP. The cysteines at positions 127 and 206 are disulfide-linked. Residues 129 to 150 traverse the membrane as a helical segment; sequence AWLFLDVLFSTASIMHLCAISL. Ergotamine-binding residues include Asp134 and Thr139. Residues 151–153 carry the DRY motif; important for ligand-induced conformation changes motif; that stretch reads DRY. Residues 151-170 are Cytoplasmic-facing; sequence DRYIAIKKPIQANQCNSRAT. A helical membrane pass occupies residues 171–191; sequence AFIKITVVWLISIGIAIPVPI. At 192–215 the chain is on the extracellular side; the sequence is KGIETDVINPHNVTCELTKDRFGS. Residue Leu208 participates in ergotamine binding. A [DE]RFG motif; may stabilize a conformation that preferentially activates signaling via beta-arrestin family members motif is present at residues 211-214; sequence DRFG. Residues 216–238 traverse the membrane as a helical segment; sequence FMVFGSLAAFFAPLTIMVVTYFL. Residues 239–323 are Cytoplasmic-facing; it reads TIHTLQKKAY…TISNEQRASK (85 aa). Residues 324–344 traverse the membrane as a helical segment; that stretch reads ALGVVFFLFLLMWCPFFITNL. At 345 to 359 the chain is on the extracellular side; the sequence is TLALCDSCNQTTLKT. A disulfide bridge connects residues Cys349 and Cys352. Residues 360-381 form a helical membrane-spanning segment; the sequence is LLEIFVWIGYVSSGVNPLIYTL. The NPxxY motif; important for ligand-induced conformation changes and signaling signature appears at 375 to 379; it reads NPLIY. Residues 382–479 are Cytoplasmic-facing; it reads FNKTFREAFG…DKAEEQVSYI (98 aa). Cys396 is lipidated: S-palmitoyl cysteine. Residues 477–479 carry the PDZ-binding motif; it reads SYI.

It belongs to the G-protein coupled receptor 1 family. In terms of assembly, interacts (via C-terminus) with MPDZ. Ubiquitous. Detected in intestine, heart, skeletal muscle, testis, urinary bladder, stomach, liver, lung, brain and kidney. Detected in osteoblasts. Detected in the raphe nucleus in the brain, in dorsal root ganglion neurons, the brain stem, cerebellum and spinal cord. Detected in interstitial cells of Cajal in the small intestine.

It localises to the cell membrane. Its subcellular location is the synapse. The protein localises to the synaptosome. In terms of biological role, G-protein coupled receptor for 5-hydroxytryptamine (serotonin). Also functions as a receptor for various ergot alkaloid derivatives and psychoactive substances. Ligand binding causes a conformation change that triggers signaling via guanine nucleotide-binding proteins (G proteins) and modulates the activity of downstream effectors. HTR2B is coupled to G(q)/G(11) G alpha proteins and activates phospholipase C-beta, releasing diacylglycerol (DAG) and inositol 1,4,5-trisphosphate (IP3) second messengers that modulate the activity of phosphatidylinositol 3-kinase and promote the release of Ca(2+) ions from intracellular stores, respectively. Beta-arrestin family members inhibit signaling via G proteins and mediate activation of alternative signaling pathways. Plays a role in the regulation of dopamine and 5-hydroxytryptamine release, 5-hydroxytryptamine uptake and in the regulation of extracellular dopamine and 5-hydroxytryptamine levels, and thereby affects neural activity. May play a role in the perception of pain. Plays a role in the regulation of behavior, including impulsive behavior. Required for normal proliferation of embryonic cardiac myocytes and normal heart development. Protects cardiomyocytes against apoptosis. Plays a role in the adaptation of pulmonary arteries to chronic hypoxia. Plays a role in vasoconstriction. Required for normal osteoblast function and proliferation, and for maintaining normal bone density. Required for normal proliferation of the interstitial cells of Cajal in the intestine. In Mus musculus (Mouse), this protein is 5-hydroxytryptamine receptor 2B (Htr2b).